We begin with the raw amino-acid sequence, 777 residues long: Semaphorin-3D (777 aa).

The first 37 residues, methionine 1–threonine 37, serve as a signal peptide directing secretion. Residues arginine 44–leucine 531 form the Sema domain. The cysteines at positions 117 and 128 are disulfide-linked. Residue asparagine 139 is glycosylated (N-linked (GlcNAc...) asparagine). Disulfide bonds link cysteine 146–cysteine 155, cysteine 286–cysteine 398, cysteine 310–cysteine 358, and cysteine 534–cysteine 552. In terms of domain architecture, PSI spans arginine 533–tryptophan 585. In terms of domain architecture, Ig-like C2-type spans serine 592–threonine 680. Asparagine 607 and asparagine 724 each carry an N-linked (GlcNAc...) asparagine glycan. An intrachain disulfide couples cysteine 665 to cysteine 731. Residues arginine 740 to histidine 765 are compositionally biased toward basic residues. The segment at arginine 740 to threonine 777 is disordered. Basic and acidic residues predominate over residues arginine 766–threonine 777.

This sequence belongs to the semaphorin family.

The protein resides in the secreted. Induces the collapse and paralysis of neuronal growth cones. Could potentially act as repulsive cues toward specific neuronal populations. Binds to neuropilin. In Mus musculus (Mouse), this protein is Semaphorin-3D (Sema3d).